The chain runs to 412 residues: Putative membrane protein 337L (412 aa).

4 N-linked (GlcNAc...) asparagine; by host glycosylation sites follow: Asn-171, Asn-186, Asn-247, and Asn-271. The helical transmembrane segment at 387–407 (VLITGIAVTGVAVLLFLLLMF) threads the bilayer.

This sequence belongs to the IIV-6 337L family.

Its subcellular location is the virion membrane. The protein is Putative membrane protein 337L of Acheta domesticus (House cricket).